Consider the following 200-residue polypeptide: Ras-related protein Rab-10 (200 aa).

GTP contacts are provided by Ser18, Gly19, Val20, Gly21, Lys22, Thr23, Cys24, Asn35, Thr36, Ser40, and Thr41. A Mg(2+)-binding site is contributed by Thr23. Short sequence motifs (switch) lie at residues 32 to 46 (DAFN…EIDF) and 64 to 81 (DTAG…YYRG). The Mg(2+) site is built by Thr41 and Asp64. Gly67 serves as a coordination point for GTP. At Thr73 the chain carries Phosphothreonine. Lys102 is subject to N6-acetyllysine. Lys102 participates in a covalent cross-link: Glycyl lysine isopeptide (Lys-Gly) (interchain with G-Cter in ubiquitin). GTP-binding residues include Asn122, Lys123, Asp125, and Met126. Residue Lys136 forms a Glycyl lysine isopeptide (Lys-Gly) (interchain with G-Cter in ubiquitin) linkage. 3 residues coordinate GTP: Ser152, Ala153, and Lys154. A Glycyl lysine isopeptide (Lys-Gly) (interchain with G-Cter in ubiquitin) cross-link involves residue Lys154. S-geranylgeranyl cysteine attachment occurs at residues Cys199 and Cys200.

The protein belongs to the small GTPase superfamily. Rab family. In terms of assembly, interacts with MYO5A; mediates the transport to the plasma membrane of SLC2A4/GLUT4 storage vesicles. Interacts with GDI1 and with GDI2; negatively regulates RAB10 association with membranes and activation. Interacts (GDP-bound form) with LLGL1; the interaction is direct and promotes RAB10 association with membranes and activation through competition with the Rab inhibitor GDI1. Interacts with EXOC4; probably associates with the exocyst. Interacts (GTP-bound form) with MICALCL, MICAL1, MICAL3, EHBP1 and EHBP1L1; at least in case of MICAL1 two molecules of RAB10 can bind to one molecule of MICAL1. Interacts with TBC1D13. Interacts with SEC16A. Interacts with CHM. Interacts with LRRK2; interaction facilitates phosphorylation of Thr-73. Interacts with RILPL1 and RILPL2 when phosphorylated on Thr-73. Interacts with TBC1D21. Interacts with MARCKS. Mg(2+) is required as a cofactor. In terms of processing, phosphorylation of Thr-73 in the switch II region by LRRK2 prevents the association of RAB regulatory proteins, including CHM and RAB GDP dissociation inhibitors GDI1 and GDI2. Phosphorylation of Thr-73 by LRRK2 is stimulated by RAB29 and RAB32. Phosphorylation by LRRK2 is required for localization to stressed lysosomes. In terms of tissue distribution, highest levels in neural and muscle tissues.

It is found in the cytoplasmic vesicle membrane. It localises to the golgi apparatus. The protein localises to the trans-Golgi network membrane. Its subcellular location is the endosome membrane. The protein resides in the recycling endosome membrane. It is found in the cytoplasmic vesicle. It localises to the phagosome membrane. The protein localises to the cell projection. Its subcellular location is the cilium. The protein resides in the endoplasmic reticulum membrane. It is found in the cytoplasm. It localises to the perinuclear region. The protein localises to the lysosome. The enzyme catalyses GTP + H2O = GDP + phosphate + H(+). Regulated by guanine nucleotide exchange factors (GEFs) DENND4C and RABIF which promote the exchange of bound GDP for free GTP. Regulated by GTPase activating proteins (GAPs) including TBC1D21 which increase the GTP hydrolysis activity. Inhibited by GDP dissociation inhibitors GDI1 and GDI2 which prevent Rab-GDP dissociation. In terms of biological role, the small GTPases Rab are key regulators of intracellular membrane trafficking, from the formation of transport vesicles to their fusion with membranes. Rabs cycle between an inactive GDP-bound form and an active GTP-bound form that is able to recruit to membranes different set of downstream effectors directly responsible for vesicle formation, movement, tethering and fusion. That Rab is mainly involved in the biosynthetic transport of proteins from the Golgi to the plasma membrane. Regulates, for instance, SLC2A4/GLUT4 glucose transporter-enriched vesicles delivery to the plasma membrane. In parallel, it regulates the transport of TLR4, a toll-like receptor to the plasma membrane and therefore may be important for innate immune response. Also plays a specific role in asymmetric protein transport to the plasma membrane. In neurons, it is involved in axonogenesis through regulation of vesicular membrane trafficking toward the axonal plasma membrane. In epithelial cells, it regulates transport from the Golgi to the basolateral membrane. May play a role in the basolateral recycling pathway and in phagosome maturation. May play a role in endoplasmic reticulum dynamics and morphology controlling tubulation along microtubules and tubules fusion. Together with LRRK2, RAB8A, and RILPL1, it regulates ciliogenesis. When phosphorylated by LRRK2 on Thr-73, it binds RILPL1 and inhibits ciliogenesis. Participates in the export of a subset of neosynthesized proteins through a Rab8-Rab10-Rab11-dependent endososomal export route. Targeted to and stabilized on stressed lysosomes through LRRK2 phosphorylation where it promotes the extracellular release of lysosomal content through EHBP1 and EHNP1L1 effector proteins. This chain is Ras-related protein Rab-10, found in Rattus norvegicus (Rat).